The chain runs to 1058 residues: Carbamoyl phosphate synthase large chain (1058 aa).

A carboxyphosphate synthetic domain region spans residues 1–401 (MPKRTDIQKI…SLLKACRSLE (401 aa)). ATP-binding residues include Arg129, Arg169, Gly175, Gly176, Arg208, Ile210, Glu215, Gly241, Ile242, His243, Gln284, and Glu298. In terms of domain architecture, ATP-grasp 1 spans 133–327 (KQLMEELEQP…IAKLAAKIAV (195 aa)). Gln284, Glu298, and Asn300 together coordinate Mg(2+). Gln284, Glu298, and Asn300 together coordinate Mn(2+). Residues 402 to 546 (IGVHHNEIPE…YSTYGWENES (145 aa)) are oligomerization domain. Positions 547–929 (IRSDKESVLV…ALYKAFEASY (383 aa)) are carbamoyl phosphate synthetic domain. One can recognise an ATP-grasp 2 domain in the interval 671–861 (EQALKELDIP…MAQVATKLIL (191 aa)). Positions 707, 746, 748, 752, 777, 778, 779, 780, 820, and 832 each coordinate ATP. Residues Gln820, Glu832, and Asn834 each coordinate Mg(2+). Residues Gln820, Glu832, and Asn834 each contribute to the Mn(2+) site. The region spanning 930-1058 (LHLPTFGNVV…ESRSFVTEAI (129 aa)) is the MGS-like domain. The interval 930–1058 (LHLPTFGNVV…ESRSFVTEAI (129 aa)) is allosteric domain.

This sequence belongs to the CarB family. Composed of two chains; the small (or glutamine) chain promotes the hydrolysis of glutamine to ammonia, which is used by the large (or ammonia) chain to synthesize carbamoyl phosphate. Tetramer of heterodimers (alpha,beta)4. It depends on Mg(2+) as a cofactor. Mn(2+) is required as a cofactor.

It catalyses the reaction hydrogencarbonate + L-glutamine + 2 ATP + H2O = carbamoyl phosphate + L-glutamate + 2 ADP + phosphate + 2 H(+). It carries out the reaction hydrogencarbonate + NH4(+) + 2 ATP = carbamoyl phosphate + 2 ADP + phosphate + 2 H(+). It functions in the pathway amino-acid biosynthesis; L-arginine biosynthesis; carbamoyl phosphate from bicarbonate: step 1/1. It participates in pyrimidine metabolism; UMP biosynthesis via de novo pathway; (S)-dihydroorotate from bicarbonate: step 1/3. Large subunit of the glutamine-dependent carbamoyl phosphate synthetase (CPSase). CPSase catalyzes the formation of carbamoyl phosphate from the ammonia moiety of glutamine, carbonate, and phosphate donated by ATP, constituting the first step of 2 biosynthetic pathways, one leading to arginine and/or urea and the other to pyrimidine nucleotides. The large subunit (synthetase) binds the substrates ammonia (free or transferred from glutamine from the small subunit), hydrogencarbonate and ATP and carries out an ATP-coupled ligase reaction, activating hydrogencarbonate by forming carboxy phosphate which reacts with ammonia to form carbamoyl phosphate. This chain is Carbamoyl phosphate synthase large chain, found in Streptococcus pneumoniae (strain P1031).